The following is a 442-amino-acid chain: Putative amino acid transporter YuiF (442 aa).

Helical transmembrane passes span 21–41 (IVIALIIGALAGGLTGGLGLG), 51–71 (LGGNATVAVSYAMLGAFAAAL), 103–123 (LIVLIILIVSCFSQNVVPVHI), 146–166 (LIACVITFGLTAPYILLPVGF), 190–210 (IPYALIIPVAGMVVGLILSVI), 236–256 (IGIAVLAIVVSLGVQLYLSQT), 259–279 (VEGMIMGALAGLIVLFVSGVM), 292–312 (MVLMAFIGFVMLVAAGFSNVL), 335–355 (LGALLMLIVGLLITMGIGSSF), 364–384 (IFVPLCMQLGFSPMATIAIIG), and 421–441 (VPTFIFYNIPLVIFGWIAALV).

It localises to the cell membrane. This Bacillus subtilis (strain 168) protein is Putative amino acid transporter YuiF (yuiF).